The sequence spans 1322 residues: Sal-like protein 1 (1322 aa).

A disordered region spans residues 1 to 41 (MSRRKQAKPQHFQSDPEVASLPRRDGDTEKGQPSRPTKSKD). Positions 22–41 (PRRDGDTEKGQPSRPTKSKD) are enriched in basic and acidic residues. The C2H2-type 1; atypical zinc-finger motif lies at 43 to 65 (HVCGRCCAEFFELSDLLLHKKSC). Positions 78–128 (PASPAKTFPPGPSLNDPDDQMKDAANKADQEDCSDLSEPKGLDREESMEVE) are disordered. Composition is skewed to basic and acidic residues over residues 96–107 (DQMKDAANKADQ) and 114–124 (SEPKGLDREES). Residue Lys-440 forms a Glycyl lysine isopeptide (Lys-Gly) (interchain with G-Cter in SUMO2) linkage. 2 consecutive C2H2-type zinc fingers follow at residues 450–472 (HKCR…LRSH) and 478–500 (FKCN…FQRH). The interval 578–659 (PIPISHSAAS…GGPGGTTFTN (82 aa)) is disordered. Residues 584–594 (SAASPQGSVKS) show a composition bias toward polar residues. Phosphoserine is present on residues Ser-591, Ser-594, and Ser-596. A compositionally biased stretch (polar residues) spans 629-645 (NMASSAVPTAGNSTLNS). Residues Lys-672, Lys-689, and Lys-700 each participate in a glycyl lysine isopeptide (Lys-Gly) (interchain with G-Cter in SUMO2) cross-link. C2H2-type zinc fingers lie at residues 705–727 (NECI…YRTH), 733–755 (FKCK…YSVH), and 765–787 (HSCP…IRMH). 2 disordered regions span residues 789-855 (GGQI…SSPL) and 891-961 (SMEG…GLSP). Residues 819 to 832 (DLDNFSDENMEECP) show a composition bias toward acidic residues. Residues 842-855 (SADASQDSLSSSPL) are compositionally biased toward low complexity. Over residues 898-935 (TNDSSSVGGDMESQSAGSPAISESTSSMQALSPSNSTQ) the composition is skewed to polar residues. Over residues 936-948 (EFHKSPGMEEKPQ) the composition is skewed to basic and acidic residues. Ser-940 is subject to Phosphoserine. Residues Lys-946 and Lys-981 each participate in a glycyl lysine isopeptide (Lys-Gly) (interchain with G-Cter in SUMO2) cross-link. 2 consecutive C2H2-type zinc fingers follow at residues 1000–1022 (TACD…YRSH) and 1028–1050 (FICT…MLTH). Residue Lys-1085 forms a Glycyl lysine isopeptide (Lys-Gly) (interchain with G-Cter in SUMO2) linkage. Residues 1094–1119 (VSPQDSKDAPTSHVPQGPLSSSATSP) are disordered. 2 C2H2-type zinc fingers span residues 1133–1155 (HYCN…ERTH) and 1161–1183 (FACT…MGTH). Glycyl lysine isopeptide (Lys-Gly) (interchain with G-Cter in SUMO2) cross-links involve residues Lys-1218, Lys-1297, and Lys-1317.

Belongs to the sal C2H2-type zinc-finger protein family. In terms of assembly, may associate with NuRD histone deacetylase complex (HDAC). Interacts with components of HDAC complex including HDAC1, HDAC2, RBBP4, RBPP7, MTA1 and MTA2. Interacts with CCNQ. Interacts with NSD2 (via PHD-type zinc fingers 1, 2 and 3). As to expression, expressed in the metanephric mesenchyme surrounding ureteric bud.

The protein localises to the nucleus. Transcriptional repressor involved in organogenesis. Plays an essential role in ureteric bud invasion during kidney development. The protein is Sal-like protein 1 (Sall1) of Mus musculus (Mouse).